Here is a 145-residue protein sequence, read N- to C-terminus: Ribonuclease P protein component (145 aa).

The segment at 119–145 is disordered; it reads PLPAAPGTMPPARTVRPSSPSPTEPEL.

Belongs to the RnpA family. In terms of assembly, consists of a catalytic RNA component (M1 or rnpB) and a protein subunit.

The enzyme catalyses Endonucleolytic cleavage of RNA, removing 5'-extranucleotides from tRNA precursor.. Its function is as follows. RNaseP catalyzes the removal of the 5'-leader sequence from pre-tRNA to produce the mature 5'-terminus. It can also cleave other RNA substrates such as 4.5S RNA. The protein component plays an auxiliary but essential role in vivo by binding to the 5'-leader sequence and broadening the substrate specificity of the ribozyme. The chain is Ribonuclease P protein component from Xanthomonas euvesicatoria pv. vesicatoria (strain 85-10) (Xanthomonas campestris pv. vesicatoria).